The following is a 427-amino-acid chain: Serine hydroxymethyltransferase (427 aa).

(6S)-5,6,7,8-tetrahydrofolate-binding positions include leucine 124 and 128–130 (GHL). The residue at position 233 (lysine 233) is an N6-(pyridoxal phosphate)lysine.

The protein belongs to the SHMT family. In terms of assembly, homodimer. Requires pyridoxal 5'-phosphate as cofactor.

Its subcellular location is the cytoplasm. It catalyses the reaction (6R)-5,10-methylene-5,6,7,8-tetrahydrofolate + glycine + H2O = (6S)-5,6,7,8-tetrahydrofolate + L-serine. It functions in the pathway one-carbon metabolism; tetrahydrofolate interconversion. Its pathway is amino-acid biosynthesis; glycine biosynthesis; glycine from L-serine: step 1/1. Functionally, catalyzes the reversible interconversion of serine and glycine with tetrahydrofolate (THF) serving as the one-carbon carrier. This reaction serves as the major source of one-carbon groups required for the biosynthesis of purines, thymidylate, methionine, and other important biomolecules. Also exhibits THF-independent aldolase activity toward beta-hydroxyamino acids, producing glycine and aldehydes, via a retro-aldol mechanism. This Acidothermus cellulolyticus (strain ATCC 43068 / DSM 8971 / 11B) protein is Serine hydroxymethyltransferase.